Consider the following 380-residue polypeptide: MSNPSPQVPEEEASTSVCRPKSSMASTSRRQRRERRFRRYLSAGRLVRAQALLQRHPGLDVDAGQPPPLHRACARHDAPALCLLLRLGADPAHQDRHGDTALHAAARQGPDAYTDFFLPLLSRCPSAMGIKNKDGETPGQILGWGPPWDSAEEEEDDASKEREWRQKLQGELEDEWQEVMGRFEGDASHETQEPESFSAWSDRLAREHAQKYQQQQREAEGSCRPPRAEGSSQSWRQQEEEQRLFRERARAKEEELRESRARRAQEALGDREPKPTRAGPREEHPRGAGRGSLWRFGDVPWPCPGGGDPEAMAAALVARGPPLEEQGALRRYLRVQQVRWHPDRFLQRFRSQIETWELGRVMGAVTALSQALNRHAEALK.

Residues 1–34 (MSNPSPQVPEEEASTSVCRPKSSMASTSRRQRRE) are disordered. ANK repeat units lie at residues 64–93 (GQPP…DPAH) and 97–133 (HGDT…IKNK). Disordered stretches follow at residues 131 to 166 (KNKD…EWRQ) and 185 to 293 (GDAS…RGSL). S150 carries the phosphoserine modification. Positions 237–286 (QQEEEQRLFRERARAKEEELRESRARRAQEALGDREPKPTRAGPREEHPR) are enriched in basic and acidic residues.

In terms of assembly, interacts with CACTIN (via N-terminal domain); the interaction occurs in a pro-inflammatory-independent manner.

It localises to the nucleus. Involved in the regulation of innate immune response. Acts as negative regulator of Toll-like receptor and interferon-regulatory factor (IRF) signaling pathways. Contributes to the negative regulation of transcriptional activation of NF-kappa-B target genes in response to endogenous pro-inflammatory stimuli. This Pan troglodytes (Chimpanzee) protein is NF-kappa-B inhibitor-like protein 1 (NFKBIL1).